The following is a 159-amino-acid chain: Phosphopantetheine adenylyltransferase (159 aa).

A substrate-binding site is contributed by T9. ATP is bound by residues 9–10 (TF) and H17. The substrate site is built by K41, L73, and R87. Residues 88 to 90 (GLR), E98, and 123 to 129 (YSFISST) each bind ATP.

The protein belongs to the bacterial CoaD family. Homohexamer. The cofactor is Mg(2+).

It is found in the cytoplasm. It carries out the reaction (R)-4'-phosphopantetheine + ATP + H(+) = 3'-dephospho-CoA + diphosphate. It functions in the pathway cofactor biosynthesis; coenzyme A biosynthesis; CoA from (R)-pantothenate: step 4/5. In terms of biological role, reversibly transfers an adenylyl group from ATP to 4'-phosphopantetheine, yielding dephospho-CoA (dPCoA) and pyrophosphate. In Pseudomonas syringae pv. syringae (strain B728a), this protein is Phosphopantetheine adenylyltransferase.